The primary structure comprises 736 residues: Protein DSF2 (736 aa).

Positions 1–10 (MNQNLKNTSW) are enriched in polar residues. 4 disordered regions span residues 1–46 (MNQN…DSQF), 178–208 (SGMK…SPNP), 229–410 (ISDN…SGEN), and 440–461 (FKTA…ARPN). Basic and acidic residues predominate over residues 14–24 (IGSDDQERKAN). Composition is skewed to polar residues over residues 25 to 46 (SSEV…DSQF) and 197 to 208 (ENGNRSTNSPNP). The span at 238–256 (NNANSKNNRTTSNNINTST) shows a compositional bias: low complexity. The segment covering 264-284 (KQSCPNEFTTTQKSNCLYRNG) has biased composition (polar residues). 3 stretches are compositionally biased toward low complexity: residues 285–294 (SSTSTNTSFS), 303–318 (KTQS…FSKL), and 335–350 (SNSS…TMTN). Residues 374–385 (KLFKSPRTRAKN) show a composition bias toward basic residues. The segment covering 392–410 (EGSSPIRSATNSLDFSGEN) has biased composition (polar residues).

This chain is Protein DSF2 (DSF2), found in Saccharomyces cerevisiae (strain ATCC 204508 / S288c) (Baker's yeast).